The primary structure comprises 839 residues: Autophagy-related protein 9A (839 aa).

The tract at residues 1 to 21 (MAQFDTEYQRLEASYSDSPPG) is disordered. Ala-2 bears the N-acetylalanine mark. At 2–61 (AQFDTEYQRLEASYSDSPPGEEDLLVHVPEGSKSPWHHIENLDLFFSRVYNLHQKNGFTC) the chain is on the cytoplasmic side. The Tyrosine-based sorting signal motif lies at 8 to 11 (YQRL). Residues Ser-14, Ser-16, and Ser-18 each carry the phosphoserine modification. The helical transmembrane segment at 62-84 (MLIGEIFELMQFLFVVAFTTFLV) threads the bilayer. At 85–128 (SCVDYDILFANKMVNHSLHPTEPVKVTLPDAFLPAQVCSARIQE) the chain is on the lumenal side. Asn-99 is a glycosylation site (N-linked (GlcNAc...) asparagine). Residues 129 to 154 (NGSLITILVIAGVFWVHRLIKFIYNI) traverse the membrane as a helical segment. At 155 to 290 (CCYWEIHSFY…ELAQRLSNRI (136 aa)) the chain is on the cytoplasmic side. An intramembrane segment occupies 291–301 (LWIGIANFLLC). Topologically, residues 302-319 (PLILIWQILYAFFSYAEV) are cytoplasmic. The stretch at 320 to 328 (LKREPGALG) is an intramembrane region. The Cytoplasmic portion of the chain corresponds to 329-371 (ARCWSLYGRCYLRHFNELEHELQSRLNRGYKPASKYMNCFLSP). A helical transmembrane segment spans residues 372–397 (LLTLLAKNCAFFAGSILAVLIALTIY). Topologically, residues 398–406 (DEDVLAVEH) are lumenal. A helical membrane pass occupies residues 407 to 424 (VLTTVTLLGVTVTVCRSF). Over 425–470 (IPDQHMVFCPEQLLRVILAHIHYMPDHWQGNAHRSQTRDEFAQLFQ) the chain is Cytoplasmic. Residues 471–480 (YKAVFILEEL) lie within the membrane without spanning it. The Cytoplasmic segment spans residues 481–483 (LSP). The stretch at 484 to 492 (IVTPLILIF) is an intramembrane region. At 493–839 (CLRPRALEII…DELPPQVHKV (347 aa)) the chain is on the cytoplasmic side. Ser-656, Ser-735, Ser-738, Ser-741, and Ser-828 each carry phosphoserine. 2 disordered regions span residues 656–688 (SPLQPGQAPTGRAPSTMTGSGVDARTASSGSSV) and 719–839 (QQAQ…VHKV). A compositionally biased stretch (basic and acidic residues) spans 724–736 (EPERHVWHRRESD). Composition is skewed to acidic residues over residues 737–747 (ESGESAPEEGG) and 823–832 (VPEEGSEDEL).

Belongs to the ATG9 family. In terms of assembly, homotrimer; forms a homotrimer with a central pore that forms a path between the two membrane leaflets. Interacts (via cytoplasmic its C-terminus) with ATG2A. Interacts with SUPT20H. Interacts (via the tyrosine-based sorting signal motif) with AP4M1; promoting association with the AP-4 complex. Interacts with ARFIP1 and ARFIP2. Interacts with PI4K2A and PI4KB. Interacts with ATG4A; the interaction is direct and promotes ATG9A trafficking. Post-translationally, ufmylated in a DDRGK1 dependent manner.

The protein resides in the preautophagosomal structure membrane. It is found in the cytoplasmic vesicle. It localises to the autophagosome membrane. The protein localises to the golgi apparatus. Its subcellular location is the trans-Golgi network membrane. The protein resides in the late endosome membrane. It is found in the recycling endosome membrane. It localises to the endoplasmic reticulum membrane. The protein localises to the mitochondrion membrane. It carries out the reaction a 1,2-diacyl-sn-glycero-3-phosphocholine(in) = a 1,2-diacyl-sn-glycero-3-phosphocholine(out). The enzyme catalyses a 1,2-diacyl-sn-glycero-3-phospho-L-serine(in) = a 1,2-diacyl-sn-glycero-3-phospho-L-serine(out). The catalysed reaction is a 1,2-diacyl-sn-glycero-3-phosphoethanolamine(in) = a 1,2-diacyl-sn-glycero-3-phosphoethanolamine(out). Functionally, phospholipid scramblase involved in autophagy by mediating autophagosomal membrane expansion. Cycles between the preautophagosomal structure/phagophore assembly site (PAS) and the cytoplasmic vesicle pool and supplies membrane for the growing autophagosome. Lipid scramblase activity plays a key role in preautophagosomal structure/phagophore assembly by distributing the phospholipids that arrive through ATG2 (ATG2A or ATG2B) from the cytoplasmic to the luminal leaflet of the bilayer, thereby driving autophagosomal membrane expansion. Also required to supply phosphatidylinositol 4-phosphate to the autophagosome initiation site by recruiting the phosphatidylinositol 4-kinase beta (PI4KB) in a process dependent on ARFIP2, but not ARFIP1. In addition to autophagy, also plays a role in necrotic cell death. This chain is Autophagy-related protein 9A, found in Bos taurus (Bovine).